Here is a 239-residue protein sequence, read N- to C-terminus: Prolactin-8A4 (239 aa).

The signal sequence occupies residues 1–31 (MMKLALSQPPFSGTLLMLVVSILLLWEKAAS). 2 disulfide bridges follow: Cys35–Cys42 and Cys102–Cys215. N-linked (GlcNAc...) asparagine glycosylation is found at Asn211 and Asn218. Cys232 and Cys239 are disulfide-bonded.

The protein belongs to the somatotropin/prolactin family. In terms of tissue distribution, placental basal zone cells.

It localises to the secreted. The chain is Prolactin-8A4 (Prl8a4) from Rattus norvegicus (Rat).